The sequence spans 188 residues: Josephin-2 (188 aa).

Residues 11 to 188 (PPSVYHERQR…EEAGCWLNTS (178 aa)) enclose the Josephin domain. The active-site Nucleophile is the C24. The active-site Proton acceptor is the H125.

It localises to the cytoplasm. The protein resides in the cytosol. It carries out the reaction Thiol-dependent hydrolysis of ester, thioester, amide, peptide and isopeptide bonds formed by the C-terminal Gly of ubiquitin (a 76-residue protein attached to proteins as an intracellular targeting signal).. Cleaves 'Lys-63'-linked poly-ubiquitin chains, and with lesser efficiency 'Lys-48'-linked poly-ubiquitin chains (in vitro). May act as a deubiquitinating enzyme. The sequence is that of Josephin-2 (Josd2) from Mus musculus (Mouse).